We begin with the raw amino-acid sequence, 184 residues long: Potassium-transporting ATPase KdpC subunit (184 aa).

A helical membrane pass occupies residues 6–26 (TAVLYTIISAVFLGLGYPLIM).

The protein belongs to the KdpC family. As to quaternary structure, the system is composed of three essential subunits: KdpA, KdpB and KdpC.

The protein resides in the cell inner membrane. Functionally, part of the high-affinity ATP-driven potassium transport (or Kdp) system, which catalyzes the hydrolysis of ATP coupled with the electrogenic transport of potassium into the cytoplasm. This subunit acts as a catalytic chaperone that increases the ATP-binding affinity of the ATP-hydrolyzing subunit KdpB by the formation of a transient KdpB/KdpC/ATP ternary complex. This Acidobacterium capsulatum (strain ATCC 51196 / DSM 11244 / BCRC 80197 / JCM 7670 / NBRC 15755 / NCIMB 13165 / 161) protein is Potassium-transporting ATPase KdpC subunit.